Consider the following 256-residue polypeptide: Chlorophyll a-b binding protein CP24 10A, chloroplastic (256 aa).

2 consecutive transmembrane segments (helical) span residues 106 to 126 and 134 to 154; these read WAMA…IPWF and AIAP…MGWV.

Belongs to the ELIP/psbS family.

It is found in the plastid. The protein resides in the chloroplast thylakoid membrane. This chain is Chlorophyll a-b binding protein CP24 10A, chloroplastic (CAP10A), found in Solanum lycopersicum (Tomato).